The primary structure comprises 2298 residues: Protein Ycf2 (2298 aa).

ATP is bound at residue 1638–1645; that stretch reads GSIGTGRS.

The protein belongs to the Ycf2 family.

It is found in the plastid. It localises to the chloroplast stroma. Its function is as follows. Probable ATPase of unknown function. Its presence in a non-photosynthetic plant (Epifagus virginiana) and experiments in tobacco indicate that it has an essential function which is probably not related to photosynthesis. The sequence is that of Protein Ycf2 from Gossypium barbadense (Sea Island cotton).